Reading from the N-terminus, the 1145-residue chain is Nucleolar protein 6 (1145 aa).

A disordered region spans residues 1 to 46 (MQKKRNRAGPPQQEAASDDGEMSDSSDKMEVAQGKGKSAVKRAPDA).

Belongs to the NRAP family. Part of the small subunit (SSU) processome, composed of more than 70 proteins and the RNA chaperone small nucleolar RNA (snoRNA) U3.

It is found in the nucleus. The protein localises to the nucleolus. The protein resides in the chromosome. In terms of biological role, part of the small subunit (SSU) processome, first precursor of the small eukaryotic ribosomal subunit. During the assembly of the SSU processome in the nucleolus, many ribosome biogenesis factors, an RNA chaperone and ribosomal proteins associate with the nascent pre-rRNA and work in concert to generate RNA folding, modifications, rearrangements and cleavage as well as targeted degradation of pre-ribosomal RNA by the RNA exosome. The sequence is that of Nucleolar protein 6 (nol6) from Xenopus tropicalis (Western clawed frog).